A 380-amino-acid polypeptide reads, in one-letter code: Peroxisomal membrane protein PEX13 (380 aa).

The segment at 1 to 30 (MSDSSAPDLPSKPSSLNAGQSSSLQTTNTG) is disordered. The Lumenal portion of the chain corresponds to 1–230 (MSDSSAPDLP…NKNTNKLSLK (230 aa)). Over residues 12–30 (KPSSLNAGQSSSLQTTNTG) the composition is skewed to polar residues. A helical membrane pass occupies residues 231-251 (PLLLFLAAVVGFPYLLKKLIA). Topologically, residues 252–380 (HLAETSQMNG…DSTEFQKMKT (129 aa)) are cytoplasmic. The region spanning 277 to 344 (TKLEFARALY…PYNYVEIIER (68 aa)) is the SH3 domain.

This sequence belongs to the peroxin-13 family. Interacts (via SH3 domain) with PEX14 (via SH3-binding motif); forming the PEX13-PEX14 docking complex.

It is found in the peroxisome membrane. In terms of biological role, component of the PEX13-PEX14 docking complex, a translocon channel that specifically mediates the import of peroxisomal cargo proteins bound to PEX5 receptor. The PEX13-PEX14 docking complex forms a large import pore which can be opened to a diameter of about 9 nm. Mechanistically, PEX5 receptor along with cargo proteins associates with the PEX14 subunit of the PEX13-PEX14 docking complex in the cytosol, leading to the insertion of the receptor into the organelle membrane with the concomitant translocation of the cargo into the peroxisome matrix. The sequence is that of Peroxisomal membrane protein PEX13 (PEX13) from Komagataella pastoris (Yeast).